Reading from the N-terminus, the 525-residue chain is GMP synthase [glutamine-hydrolyzing] (525 aa).

The region spanning 9–207 (RILILDFGSQ…VMDICKCEKL (199 aa)) is the Glutamine amidotransferase type-1 domain. C86 functions as the Nucleophile in the catalytic mechanism. Residues H181 and E183 contribute to the active site. The GMPS ATP-PPase domain maps to 208-400 (WTAGAIIEDA…LGLPYDMLYR (193 aa)). Residue 235–241 (SGGVDSS) participates in ATP binding.

As to quaternary structure, homodimer.

The enzyme catalyses XMP + L-glutamine + ATP + H2O = GMP + L-glutamate + AMP + diphosphate + 2 H(+). The protein operates within purine metabolism; GMP biosynthesis; GMP from XMP (L-Gln route): step 1/1. Functionally, catalyzes the synthesis of GMP from XMP. The chain is GMP synthase [glutamine-hydrolyzing] from Alteromonas mediterranea (strain DSM 17117 / CIP 110805 / LMG 28347 / Deep ecotype).